The following is a 1004-amino-acid chain: E3 ubiquitin-protein ligase NEDD4-like (1004 aa).

Residues 30–154 (LASHHSRGLE…TEDPTMERPY (125 aa)) form the C2 domain. Disordered regions lie at residues 207-230 (SNDS…WEEK) and 272-407 (AAHR…TPSV). The WW 1 domain occupies 221–254 (PPLPPGWEEKVDNLGRTYYVNHNNRSTQWHRPSL). Ser341 carries the phosphoserine modification. Thr347 carries the phosphothreonine modification. Polar residues-rich tracts occupy residues 347-359 (TPDS…SSLI) and 366-376 (RLRSCSVTDTV). A Phosphoserine; by WNK1 and WNK4 modification is found at Ser371. Thr396 is subject to Phosphothreonine; by SGK1. The WW 2 domain maps to 414–447 (PGLPSGWEERKDAKGRTYYVNHNNRTTTWTRPIM). The segment at 453-523 (GASGSATNSN…YNSPKPQHKV (71 aa)) is disordered. A Phosphoserine modification is found at Ser475. Position 477 is a phosphoserine; by SGK1 (Ser477). Phosphoserine occurs at positions 478, 493, 504, 508, 512, and 516. Residues 489–500 (GAKDSPIRRAVK) show a composition bias toward basic and acidic residues. 2 WW domains span residues 526–559 (SFLP…DPRL) and 577–610 (GPLP…DPRL). An HECT domain is found at 669–1003 (RPDVLKARLW…VENAQGFEGV (335 aa)). Cys971 functions as the Glycyl thioester intermediate in the catalytic mechanism.

In terms of assembly, interacts with UBE2E3. Interacts with NDFIP1; this interaction activates the E3 ubiquitin-protein ligase. Interacts with NDFIP2; this interaction activates the E3 ubiquitin-protein ligase. Interacts (via WW domains) with SCN1A. Interacts (via WW domains) with SCN2A. Interacts (via WW domains) with SCN3A. Interacts (via WW domains) with SCN5A. Interacts (via WW domains) with SCN8A. Interacts (via WW domains) with SCN9A. Interacts (via WW domains) with SCN10A. Interacts (via WW domains) with CLCN5. Interacts with SMAD2. Interacts with SMAD3. Interacts with SMAD6. Interacts with SMAD7. The phosphorylated form interacts with 14-3-3 proteins. Interacts with TNK2. Interacts with WNK1. Interacts with SGK1. Interacts (via C2 domain) with NPC2. Interacts with ARRDC4. Interacts with KCNQ1; promotes internalization of KCNQ1. Interacts (via domains WW1, 3 and 4) with USP36; the interaction inhibits ubiquitination of, at least, NTRK1, KCNQ2 and KCNQ3 by NEDD4L. Interacts with PRRG4 (via cytoplasmic domain). Interacts with LDLRAD3; the interaction is direct. Interacts with UBE2D2. Interacts with TTYH2 and TTYH3. Phosphorylated; which impairs interaction with SCNN. Interaction with YWHAH inhibits dephosphorylation. Aldosterone induces Ser-477 phosphorylation by SGK1. Post-translationally, auto-ubiquitinated. Deubiquitinated by USP36, no effect on NEDD4L protein levels. Both proteins interact and regulate each other's ubiquitination levels. As to expression, highly expressed in liver and kidney. Also expressed in heart, brain and lung. Isoform 1 is expressed in kidney, lung and gut. Isoform 3 is ubiquitously expressed.

The protein localises to the cytoplasm. It localises to the golgi apparatus. It is found in the endosome. Its subcellular location is the multivesicular body. It carries out the reaction S-ubiquitinyl-[E2 ubiquitin-conjugating enzyme]-L-cysteine + [acceptor protein]-L-lysine = [E2 ubiquitin-conjugating enzyme]-L-cysteine + N(6)-ubiquitinyl-[acceptor protein]-L-lysine.. The catalysed reaction is [E2 ubiquitin-conjugating enzyme]-S-ubiquitinyl-L-cysteine + [acceptor protein]-L-cysteine = [E2 ubiquitin-conjugating enzyme]-L-cysteine + [acceptor protein]-S-ubiquitinyl-L-cysteine.. The protein operates within protein modification; protein ubiquitination. Its activity is regulated as follows. Activated by NDFIP1- and NDFIP2-binding. E3 ubiquitin-protein ligase that mediates the polyubiquitination of lysine and cysteine residues on target proteins and is thereby implicated in the regulation of various signaling pathways including autophagy, innate immunity or DNA repair. Inhibits TGF-beta signaling by triggering SMAD2 and TGFBR1 ubiquitination and proteasome-dependent degradation. Downregulates autophagy and cell growth by ubiquitinating and reducing cellular ULK1 or ASCT2 levels. Promotes ubiquitination and internalization of various plasma membrane channels such as ENaC, SCN2A/Nav1.2, SCN3A/Nav1.3, SCN5A/Nav1.5, SCN9A/Nav1.7, SCN10A/Nav1.8, KCNA3/Kv1.3, KCNH2, EAAT1, KCNQ2/Kv7.2, KCNQ3/Kv7.3 or CLC5. Promotes ubiquitination and degradation of SGK1 and TNK2. Ubiquitinates BRAT1 and this ubiquitination is enhanced in the presence of NDFIP1. Plays a role in dendrite formation by melanocytes. Involved in the regulation of TOR signaling. Ubiquitinates and regulates protein levels of NTRK1 once this one is activated by NGF. Plays a role in antiviral innate immunity by catalyzing 'Lys-29'-linked cysteine ubiquitination of TRAF3, resulting in enhanced 'Lys-48' and 'Lys-63'-linked ubiquitination of TRAF3. Ubiquitinates TTYH2 and TYYH3 and regulates protein levels of TTYH2. The polypeptide is E3 ubiquitin-protein ligase NEDD4-like (Nedd4l) (Mus musculus (Mouse)).